The primary structure comprises 365 residues: MLFWIIKITSYFYSSTLFEVMNSVLFRGVGGLFFSLFISIVIGNRIIVWLKYKLRMLQTIRIDGPQSHKLKYGTPTMGGIIILISVVTSVIIWSDLSNIYIWYILFIFVMYGILGLVDDFLKIKRGDNLGLTILNKYLWQSIIAWILIVIMFINRVNYVENQSGLEFLRNIVCKLKIWDMILAYFVIVGTSNSVNLSDGLDGLVIVPVILVVSGLAIVTWVVGNIYITSDLYIEHVDCIKELVVVCASIIGAGLGFLWFNSYPSQIFMGDVGSLSLGGVIGLVSILLHQEYLLLIMGGIFVIESLSVIFQVSYFKIFKKRIFKMAPIHHHFELKGYMEPKIVVRFWIVSSILVLLSIVIFILSKY.

10 helical membrane passes run 29–49 (VGGL…IIVW), 73–93 (GTPT…VIIW), 97–117 (SNIY…LGLV), 133–153 (ILNK…IMFI), 171–191 (IVCK…VGTS), 202–222 (GLVI…TWVV), 242–262 (LVVV…FNSY), 266–286 (IFMG…VSIL), 291–311 (YLLL…IFQV), and 341–361 (IVVR…VIFI).

The protein belongs to the glycosyltransferase 4 family. MraY subfamily. The cofactor is Mg(2+).

Its subcellular location is the cell inner membrane. The enzyme catalyses UDP-N-acetyl-alpha-D-muramoyl-L-alanyl-gamma-D-glutamyl-meso-2,6-diaminopimeloyl-D-alanyl-D-alanine + di-trans,octa-cis-undecaprenyl phosphate = di-trans,octa-cis-undecaprenyl diphospho-N-acetyl-alpha-D-muramoyl-L-alanyl-D-glutamyl-meso-2,6-diaminopimeloyl-D-alanyl-D-alanine + UMP. Its pathway is cell wall biogenesis; peptidoglycan biosynthesis. Functionally, catalyzes the initial step of the lipid cycle reactions in the biosynthesis of the cell wall peptidoglycan: transfers peptidoglycan precursor phospho-MurNAc-pentapeptide from UDP-MurNAc-pentapeptide onto the lipid carrier undecaprenyl phosphate, yielding undecaprenyl-pyrophosphoryl-MurNAc-pentapeptide, known as lipid I. In Blochmanniella floridana, this protein is Phospho-N-acetylmuramoyl-pentapeptide-transferase.